Consider the following 120-residue polypeptide: Large ribosomal subunit protein uL18 (120 aa).

The protein belongs to the universal ribosomal protein uL18 family. In terms of assembly, part of the 50S ribosomal subunit; part of the 5S rRNA/L5/L18/L25 subcomplex. Contacts the 5S and 23S rRNAs.

This is one of the proteins that bind and probably mediate the attachment of the 5S RNA into the large ribosomal subunit, where it forms part of the central protuberance. The sequence is that of Large ribosomal subunit protein uL18 from Sinorhizobium medicae (strain WSM419) (Ensifer medicae).